Consider the following 496-residue polypeptide: Glycerol kinase (496 aa).

Position 12 (threonine 12) interacts with ADP. ATP is bound by residues threonine 12, threonine 13, and serine 14. Threonine 12 is a sn-glycerol 3-phosphate binding site. An ADP-binding site is contributed by arginine 16. Positions 82, 83, 134, and 244 each coordinate sn-glycerol 3-phosphate. Glycerol contacts are provided by arginine 82, glutamate 83, tyrosine 134, aspartate 244, and glutamine 245. 2 residues coordinate ADP: threonine 266 and glycine 309. Residues threonine 266, glycine 309, glutamine 313, and glycine 410 each coordinate ATP. 2 residues coordinate ADP: glycine 410 and asparagine 414.

Belongs to the FGGY kinase family.

It catalyses the reaction glycerol + ATP = sn-glycerol 3-phosphate + ADP + H(+). The protein operates within polyol metabolism; glycerol degradation via glycerol kinase pathway; sn-glycerol 3-phosphate from glycerol: step 1/1. Its activity is regulated as follows. Inhibited by fructose 1,6-bisphosphate (FBP). Functionally, key enzyme in the regulation of glycerol uptake and metabolism. Catalyzes the phosphorylation of glycerol to yield sn-glycerol 3-phosphate. The chain is Glycerol kinase from Treponema denticola (strain ATCC 35405 / DSM 14222 / CIP 103919 / JCM 8153 / KCTC 15104).